The following is a 147-amino-acid chain: Large ribosomal subunit protein uL16 (147 aa).

The protein belongs to the universal ribosomal protein uL16 family. Part of the 50S ribosomal subunit.

In terms of biological role, binds 23S rRNA and is also seen to make contacts with the A and possibly P site tRNAs. This Clostridium acetobutylicum (strain ATCC 824 / DSM 792 / JCM 1419 / IAM 19013 / LMG 5710 / NBRC 13948 / NRRL B-527 / VKM B-1787 / 2291 / W) protein is Large ribosomal subunit protein uL16.